A 565-amino-acid chain; its full sequence is Nephrocystin-1 (565 aa).

A compositionally biased stretch (acidic residues) spans 1-32 (GEEEDEEEEEEEESEEGGGEEEESEEEEEEKQ). 2 disordered regions span residues 1 to 46 (GEEE…KEYI) and 95 to 132 (VEPYNKEEGQDTSEEEDSEEDVEVGDQTAGGEEVKQRT). A coiled-coil region spans residues 2 to 48 (EEEDEEEEEEEESEEGGGEEEESEEEEEEKQENESHHQATSKEYIAV). S14 carries the post-translational modification Phosphoserine. Residues 40-100 (ATSKEYIAVG…PRTYVEPYNK (61 aa)) form the SH3 domain. Residues 104-118 (QDTSEEEDSEEDVEV) show a composition bias toward acidic residues. Y182 carries the post-translational modification Phosphotyrosine; by FAK2. Residue Y554 is modified to Phosphotyrosine; by SRC.

It belongs to the nephrocystin-1 family. As to quaternary structure, interacts with Crk-associated substrate BCAR1, NPHP4, PTK2B/PYK2 and tensin. Interacts with INVS and NPHP3. Interacts with AHI1 and TNK2. Interacts with NPHP4 in a complex containing NPHP1, NPHP4 and RPGRIP1L/NPHP8. Interacts with IQCB1; the interaction likely requires additional interactors. Interacts with KIF7. Interacts with ANKS3. Interacts with SPATA7. Interacts with FLNA. In terms of tissue distribution, expressed in renal cells (at protein level).

It is found in the cell junction. Its subcellular location is the adherens junction. The protein resides in the cell projection. It localises to the cilium. The protein localises to the cytoplasm. It is found in the cytoskeleton. Its subcellular location is the cilium axoneme. The protein resides in the tight junction. In terms of biological role, together with BCAR1 it may play a role in the control of epithelial cell polarity. Involved in the organization of apical junctions in kidney cells together with NPHP4 and RPGRIP1L/NPHP8. Does not seem to be strictly required for ciliogenesis. Seems to help to recruit PTK2B/PYK2 to cell matrix adhesions, thereby initiating phosphorylation of PTK2B/PYK2 and PTK2B/PYK2-dependent signaling. May play a role in the regulation of intraflagellar transport (IFT) during cilia assembly. Required for normal retina development. In connecting photoreceptor cilia influences the movement of some IFT proteins such as IFT88 and WDR19. Involved in spermatogenesis. The sequence is that of Nephrocystin-1 (NPHP1) from Canis lupus familiaris (Dog).